A 407-amino-acid chain; its full sequence is Methylthioribose kinase (407 aa).

ATP contacts are provided by residues Asn40, Lys57, and 111–113 (EDL). Asp229 contacts substrate. ATP is bound at residue 246-248 (DAE). Residue Arg344 participates in substrate binding.

Belongs to the methylthioribose kinase family. In terms of assembly, homodimer.

It carries out the reaction 5-(methylsulfanyl)-D-ribose + ATP = 5-(methylsulfanyl)-alpha-D-ribose 1-phosphate + ADP + H(+). It functions in the pathway amino-acid biosynthesis; L-methionine biosynthesis via salvage pathway; S-methyl-5-thio-alpha-D-ribose 1-phosphate from S-methyl-5'-thioadenosine (hydrolase route): step 2/2. Functionally, catalyzes the phosphorylation of methylthioribose into methylthioribose-1-phosphate. The polypeptide is Methylthioribose kinase (Yersinia pseudotuberculosis serotype O:3 (strain YPIII)).